We begin with the raw amino-acid sequence, 219 residues long: tRNA (guanine-N(7)-)-methyltransferase (219 aa).

Residues Glu51, Glu76, Asp103, and Asp125 each contribute to the S-adenosyl-L-methionine site. Asp125 is an active-site residue. Substrate-binding positions include Lys129, Asp161, and 199-202 (TRYE).

This sequence belongs to the class I-like SAM-binding methyltransferase superfamily. TrmB family.

The catalysed reaction is guanosine(46) in tRNA + S-adenosyl-L-methionine = N(7)-methylguanosine(46) in tRNA + S-adenosyl-L-homocysteine. It functions in the pathway tRNA modification; N(7)-methylguanine-tRNA biosynthesis. Functionally, catalyzes the formation of N(7)-methylguanine at position 46 (m7G46) in tRNA. In Hyphomonas neptunium (strain ATCC 15444), this protein is tRNA (guanine-N(7)-)-methyltransferase.